We begin with the raw amino-acid sequence, 71 residues long: Large ribosomal subunit protein bL31 (71 aa).

Zn(2+)-binding residues include Cys-16, Cys-18, Cys-37, and Cys-40.

It belongs to the bacterial ribosomal protein bL31 family. Type A subfamily. In terms of assembly, part of the 50S ribosomal subunit. It depends on Zn(2+) as a cofactor.

In terms of biological role, binds the 23S rRNA. This is Large ribosomal subunit protein bL31 from Aeromonas salmonicida (strain A449).